The chain runs to 138 residues: Acidic phospholipase A2 6 (138 aa).

A signal peptide spans 1-16 (MRTLWIMAVLLVGVEG). Intrachain disulfides connect C42–C131, C44–C60, C59–C111, C65–C138, C66–C104, C73–C97, and C91–C102. The Ca(2+) site is built by Y43, G45, and G47. Residue H63 is part of the active site. D64 serves as a coordination point for Ca(2+). The active site involves D105.

It belongs to the phospholipase A2 family. Group II subfamily. D49 sub-subfamily. As to quaternary structure, homodimer. It depends on Ca(2+) as a cofactor. As to expression, expressed by the venom gland.

The protein resides in the secreted. It carries out the reaction a 1,2-diacyl-sn-glycero-3-phosphocholine + H2O = a 1-acyl-sn-glycero-3-phosphocholine + a fatty acid + H(+). Functionally, snake venom phospholipase A2 (PLA2) that has high lipolytic activity. PLA2 catalyzes the calcium-dependent hydrolysis of the 2-acyl groups in 3-sn-phosphoglycerides. This is Acidic phospholipase A2 6 from Craspedocephalus gramineus (Bamboo pit viper).